A 203-amino-acid polypeptide reads, in one-letter code: High frequency lysogenization protein HflD homolog (203 aa).

The protein belongs to the HflD family.

Its subcellular location is the cytoplasm. It is found in the cell inner membrane. The polypeptide is High frequency lysogenization protein HflD homolog (Dichelobacter nodosus (strain VCS1703A)).